We begin with the raw amino-acid sequence, 311 residues long: Chemotaxis protein CheV3 (311 aa).

The CheW-like domain maps to 13 to 164 (EIELVDFRIY…LESILDDLKL (152 aa)). One can recognise a Response regulatory domain in the interval 182–308 (EVLFLDDSKT…FTEEISKILD (127 aa)). A 4-aspartylphosphate modification is found at Asp-241.

In terms of biological role, plays a role in chemotaxis signal transduction system in order to colonize the host stomach. May act as a phosphate sink to control the flow of phosphate to CheAY. The chain is Chemotaxis protein CheV3 from Helicobacter pylori (strain ATCC 700392 / 26695) (Campylobacter pylori).